A 605-amino-acid polypeptide reads, in one-letter code: MNIEQLKERQKRIRNFSIIAHIDHGKSTLADRILEFTGTIDKRIMKEQILDSMDLERERGITIKLNAVEINYKSKDGKNYIMHLIDTPGHVDFSYEVSRSLAACEGAILIIDAAQGIQAQTLANVYLAVDNNLTLIPVLNKVDLPSADVPKVKEEIKETLGLDPEQALIASGKTGLGVIDILEQIVTRISPPQGDIQKPLQALIFDSYFDSYKGVVPSIRIVNGTVKKGDQIRFMASNSVYEVVEVGVYNPKQIVKDFLAPGDVGYLTAAIKSINHVRVGDTITSQTNQALLPLPGYKQMNSVVFCGLYPVETNKYDILKEALEKLKLNDSSLIFEPESSNALGLGFRTGFLGLLHMEIIQERISREFGVEVIATAPSVIYHVYSIKGEKLLVDNPSKLPSTQMIDRIEEPFIKATIMCPEIYIGKVMELSQNKRGALQNIEYIDSQRVMINYLLPFSEIIYSYFDKLKSLTKGYASFDYEIDKYRVSKLQKMDILLNGEIVDALSLIVHHDFAYERGKAICETLKEFIPKQMFEIPIQAALGKKIIARQTIKAMRKDVTAKLYGGDVTRKKKLLEKQKKGKKKMKTLGKVQLPQKAFLAILATK.

The 183-residue stretch at 11–193 (KRIRNFSIIA…QIVTRISPPQ (183 aa)) folds into the tr-type G domain. GTP is bound by residues 23-28 (DHGKST) and 140-143 (NKVD).

This sequence belongs to the TRAFAC class translation factor GTPase superfamily. Classic translation factor GTPase family. LepA subfamily.

Its subcellular location is the cell membrane. It catalyses the reaction GTP + H2O = GDP + phosphate + H(+). Its function is as follows. Required for accurate and efficient protein synthesis under certain stress conditions. May act as a fidelity factor of the translation reaction, by catalyzing a one-codon backward translocation of tRNAs on improperly translocated ribosomes. Back-translocation proceeds from a post-translocation (POST) complex to a pre-translocation (PRE) complex, thus giving elongation factor G a second chance to translocate the tRNAs correctly. Binds to ribosomes in a GTP-dependent manner. This Onion yellows phytoplasma (strain OY-M) protein is Elongation factor 4.